The sequence spans 1360 residues: DNA-directed RNA polymerase subunit beta (1360 aa).

This sequence belongs to the RNA polymerase beta chain family. As to quaternary structure, the RNAP catalytic core consists of 2 alpha, 1 beta, 1 beta' and 1 omega subunit. When a sigma factor is associated with the core the holoenzyme is formed, which can initiate transcription.

It catalyses the reaction RNA(n) + a ribonucleoside 5'-triphosphate = RNA(n+1) + diphosphate. Its function is as follows. DNA-dependent RNA polymerase catalyzes the transcription of DNA into RNA using the four ribonucleoside triphosphates as substrates. The sequence is that of DNA-directed RNA polymerase subunit beta from Desulfotalea psychrophila (strain LSv54 / DSM 12343).